The primary structure comprises 398 residues: Putative FBD-associated F-box protein At5g56700 (398 aa).

Positions 1–47 constitute an F-box domain; it reads MAKISDLSDELLVKILSFLPTKEAVSTSCLSKQWEFLWMWLSKLEFY. An FBD domain is found at 340 to 388; sequence WKNNKSSVPKCLLESLETFEFAGYIGTPEERDFLSYIFKHARCLKSSSI.

This is Putative FBD-associated F-box protein At5g56700 from Arabidopsis thaliana (Mouse-ear cress).